A 376-amino-acid chain; its full sequence is Alanine racemase (376 aa).

Lys36 acts as the Proton acceptor; specific for D-alanine in catalysis. The residue at position 36 (Lys36) is an N6-(pyridoxal phosphate)lysine. Residue Arg134 coordinates substrate. Tyr266 serves as the catalytic Proton acceptor; specific for L-alanine. Met314 provides a ligand contact to substrate.

This sequence belongs to the alanine racemase family. Requires pyridoxal 5'-phosphate as cofactor.

It catalyses the reaction L-alanine = D-alanine. Its pathway is amino-acid biosynthesis; D-alanine biosynthesis; D-alanine from L-alanine: step 1/1. Its function is as follows. Catalyzes the interconversion of L-alanine and D-alanine. May also act on other amino acids. This is Alanine racemase (alr) from Nitratidesulfovibrio vulgaris (strain DP4) (Desulfovibrio vulgaris).